The primary structure comprises 165 residues: Phosphopantetheine adenylyltransferase (165 aa).

Thr9 contacts substrate. ATP-binding positions include 9–10 (TF) and His17. Residues Lys41, Leu73, and Arg87 each contribute to the substrate site. ATP contacts are provided by residues 88–90 (GLR), Glu98, and 123–129 (YQFISGT).

This sequence belongs to the bacterial CoaD family. In terms of assembly, homohexamer. The cofactor is Mg(2+).

Its subcellular location is the cytoplasm. The enzyme catalyses (R)-4'-phosphopantetheine + ATP + H(+) = 3'-dephospho-CoA + diphosphate. It participates in cofactor biosynthesis; coenzyme A biosynthesis; CoA from (R)-pantothenate: step 4/5. In terms of biological role, reversibly transfers an adenylyl group from ATP to 4'-phosphopantetheine, yielding dephospho-CoA (dPCoA) and pyrophosphate. The chain is Phosphopantetheine adenylyltransferase from Polynucleobacter necessarius subsp. necessarius (strain STIR1).